Reading from the N-terminus, the 435-residue chain is Serine--tRNA ligase (435 aa).

242 to 244 contributes to the L-serine binding site; sequence TAE. 273-275 serves as a coordination point for ATP; that stretch reads RSE. Glu-296 lines the L-serine pocket. 360–363 contacts ATP; that stretch reads EISS. L-serine is bound at residue Ser-396.

The protein belongs to the class-II aminoacyl-tRNA synthetase family. Type-1 seryl-tRNA synthetase subfamily. In terms of assembly, homodimer. The tRNA molecule binds across the dimer.

It is found in the cytoplasm. The catalysed reaction is tRNA(Ser) + L-serine + ATP = L-seryl-tRNA(Ser) + AMP + diphosphate + H(+). It catalyses the reaction tRNA(Sec) + L-serine + ATP = L-seryl-tRNA(Sec) + AMP + diphosphate + H(+). It participates in aminoacyl-tRNA biosynthesis; selenocysteinyl-tRNA(Sec) biosynthesis; L-seryl-tRNA(Sec) from L-serine and tRNA(Sec): step 1/1. Catalyzes the attachment of serine to tRNA(Ser). Is also able to aminoacylate tRNA(Sec) with serine, to form the misacylated tRNA L-seryl-tRNA(Sec), which will be further converted into selenocysteinyl-tRNA(Sec). The chain is Serine--tRNA ligase from Vibrio parahaemolyticus serotype O3:K6 (strain RIMD 2210633).